A 175-amino-acid polypeptide reads, in one-letter code: Thioredoxin-like protein CITRX, chloroplastic (175 aa).

The N-terminal 73 residues, 1–73 (MQAASLAFHP…REDYLVKKLS (73 aa)), are a transit peptide targeting the chloroplast. Positions 74-175 (AKEIQELIKG…MMRDIINNDL (102 aa)) constitute a Thioredoxin domain. Catalysis depends on nucleophile residues cysteine 98 and cysteine 101. A disulfide bridge connects residues cysteine 98 and cysteine 101.

Belongs to the thioredoxin family. Plant CITRX-type subfamily.

The protein resides in the plastid. It localises to the chloroplast. In terms of biological role, probable thiol-disulfide oxidoreductase that may play a role in proper chloroplast development. This Solanum tuberosum (Potato) protein is Thioredoxin-like protein CITRX, chloroplastic.